The following is a 780-amino-acid chain: Ino eighty subunit 1 (780 aa).

Disordered stretches follow at residues 1-25 (MADVESAGVDDSFAQSEPHDEQQIH) and 563-780 (ANGP…PGWN). Residues 563–584 (ANGPRRDRKKEREERQKAREEA) are compositionally biased toward basic and acidic residues. Positions 600–613 (SRARAQRNAKRKLA) are enriched in basic residues. Positions 614–635 (RAAAAASSTPSASTPKTAAARS) are enriched in low complexity. Acidic residues-rich tracts occupy residues 676-686 (LEGEESLDDID) and 723-751 (DADDALSSDEEEEEAEDEELDEMDVEGDD).

In terms of assembly, component of the chromatin-remodeling INO80 complex.

Its subcellular location is the nucleus. Probably involved in transcription regulation via its interaction with the INO80 complex, a chromatin-remodeling complex. This is Ino eighty subunit 1 from Emericella nidulans (strain FGSC A4 / ATCC 38163 / CBS 112.46 / NRRL 194 / M139) (Aspergillus nidulans).